The chain runs to 399 residues: Delta(12) acyl-lipid conjugase (11E,13E-forming) (399 aa).

Positions 11 to 30 are disordered; it reads RNGGGPKKKMGPGQGLGPGE. A run of 2 helical transmembrane segments spans residues 61-81 and 93-113; these read FSYL…ADTY and LAWP…WGIA. The Histidine box-1 motif lies at 114 to 118; that stretch reads HDCGH. The helical transmembrane segment at 126–146 threads the bilayer; the sequence is LVDDVVGFLIHSLVFVPYFSF. Residues 150–154 carry the Histidine box-2 motif; it reads HRRHH. 3 consecutive transmembrane segments (helical) span residues 188–208, 232–252, and 258–278; these read VFII…FNIS, VLVH…YRIA, and GWLI…VVLI. Residues 325 to 329 carry the Histidine box-3 motif; sequence HVVHH.

This sequence belongs to the fatty acid desaturase type 1 family. As to expression, expressed in developing seeds, but not in leaves.

It is found in the membrane. The catalysed reaction is a (9Z,12Z)-octadecadienoyl-containing glycerolipid + 2 Fe(II)-[cytochrome b5] + O2 + 2 H(+) = a (9Z,11E,13E)-octadecatrienoyl-containing glycerolipid + 2 Fe(III)-[cytochrome b5] + 2 H2O. The enzyme catalyses (9Z,12Z,15Z)-octadecatrienoyl-containing glycerolipid + 2 Fe(II)-[cytochrome b5] + O2 + 2 H(+) = a (9Z,11E,13E,15Z)-octadecatetraenoyl-containing glycerolipid + 2 Fe(III)-[cytochrome b5] + 2 H2O. It functions in the pathway lipid metabolism; polyunsaturated fatty acid biosynthesis. In terms of biological role, converts linoleic acid to alpha-eleostearic acid (18:3(9Z,11E,13E)) and alpha-linolenic acid to alpha-parinaric acid (18:4(9Z,11E, 13E, 15Z)). Converts a single cis double bond at carbon 12 to two conjugated trans bonds at positions 11 and 13. In Momordica charantia (Bitter gourd), this protein is Delta(12) acyl-lipid conjugase (11E,13E-forming).